The primary structure comprises 293 residues: Diaminopimelate epimerase (293 aa).

N17, Q47, and N67 together coordinate substrate. C76 acts as the Proton donor in catalysis. Substrate-binding positions include 77–78 (GN), N164, N197, and 215–216 (ER). C224 (proton acceptor) is an active-site residue. 225–226 (GS) is a binding site for substrate.

This sequence belongs to the diaminopimelate epimerase family. As to quaternary structure, homodimer.

It is found in the cytoplasm. The catalysed reaction is (2S,6S)-2,6-diaminopimelate = meso-2,6-diaminopimelate. Its pathway is amino-acid biosynthesis; L-lysine biosynthesis via DAP pathway; DL-2,6-diaminopimelate from LL-2,6-diaminopimelate: step 1/1. Functionally, catalyzes the stereoinversion of LL-2,6-diaminopimelate (L,L-DAP) to meso-diaminopimelate (meso-DAP), a precursor of L-lysine and an essential component of the bacterial peptidoglycan. The chain is Diaminopimelate epimerase from Rhodopseudomonas palustris (strain ATCC BAA-98 / CGA009).